The sequence spans 593 residues: Probable E3 ubiquitin-protein ligase ARI2 (593 aa).

The TRIAD supradomain stretch occupies residues 120–334; it reads SMMSCDICVE…ISGHSCGRFQ (215 aa). Zn(2+)-binding residues include Cys-124, Cys-127, Cys-141, His-143, Cys-146, Cys-149, Cys-168, Cys-173, Cys-215, Cys-221, Cys-237, Cys-239, Cys-244, Cys-247, His-252, Cys-257, Cys-284, and Cys-287. The RING-type 1 zinc finger occupies 124–173; sequence CDICVEDVPGYQLTRMDCGHSFCNNCWTGHFTVKINEGQSKRIICMAHKC. Residues 195 to 257 form an IBR-type zinc finger; that stretch reads EKFDRFLLES…SSQAHSPCSC (63 aa). The RING-type 2; atypical zinc finger occupies 284 to 312; sequence CPKCHKPVEKNGGCNLVTCLCRQSFCWLC. The active site involves Cys-297. Cys-302, Cys-304, Cys-309, Cys-312, His-320, and Cys-330 together coordinate Zn(2+).

It belongs to the RBR family. Ariadne subfamily. It depends on Zn(2+) as a cofactor. As to expression, ubiquitous.

The catalysed reaction is [E2 ubiquitin-conjugating enzyme]-S-ubiquitinyl-L-cysteine + [acceptor protein]-L-lysine = [E2 ubiquitin-conjugating enzyme]-L-cysteine + [acceptor protein]-N(6)-ubiquitinyl-L-lysine.. It participates in protein modification; protein ubiquitination. Might act as an E3 ubiquitin-protein ligase, or as part of E3 complex, which accepts ubiquitin from specific E2 ubiquitin-conjugating enzymes and then transfers it to substrates. In Arabidopsis thaliana (Mouse-ear cress), this protein is Probable E3 ubiquitin-protein ligase ARI2 (ARI2).